The sequence spans 449 residues: Glucose-6-phosphate isomerase (449 aa).

Glutamate 290 acts as the Proton donor in catalysis. Catalysis depends on residues histidine 311 and lysine 425.

Belongs to the GPI family.

It is found in the cytoplasm. The enzyme catalyses alpha-D-glucose 6-phosphate = beta-D-fructose 6-phosphate. It functions in the pathway carbohydrate biosynthesis; gluconeogenesis. The protein operates within carbohydrate degradation; glycolysis; D-glyceraldehyde 3-phosphate and glycerone phosphate from D-glucose: step 2/4. In terms of biological role, catalyzes the reversible isomerization of glucose-6-phosphate to fructose-6-phosphate. This is Glucose-6-phosphate isomerase from Exiguobacterium sibiricum (strain DSM 17290 / CCUG 55495 / CIP 109462 / JCM 13490 / 255-15).